We begin with the raw amino-acid sequence, 205 residues long: Guanylate kinase (205 aa).

The Guanylate kinase-like domain maps to G5 to E184. ATP is bound at residue G12–G19.

It belongs to the guanylate kinase family.

The protein resides in the cytoplasm. The catalysed reaction is GMP + ATP = GDP + ADP. Functionally, essential for recycling GMP and indirectly, cGMP. The chain is Guanylate kinase from Listeria innocua serovar 6a (strain ATCC BAA-680 / CLIP 11262).